The primary structure comprises 289 residues: MLTRIVLFAITNLAVLILASIVMSLLGVNPTQMSGLLVMALILGFGGSLISLLMSKAIAKHTTGAYVIEQPRNPSQRWLLDTVRRQAEIVGIGMPEVAIYEGPEINAFATGADRNNALVAVSTGLLQNMSQDEAEAVLGHEIAHVANGDMVTMALLQGVLNTFVIVLARVVGGFIDSLLSGNRGSGRGVAYYGIVLVLELLFGLFATIITMWFSRRREFRADEGGAYLAGRNKMIAALERLGINHGQSTLPTQVQAFGIYGGIGEGLRKLFLSHPPLSERIAALRMARE.

The next 2 membrane-spanning stretches (helical) occupy residues 5 to 25 and 33 to 53; these read IVLF…VMSL and MSGL…ISLL. His-140 is a Zn(2+) binding site. The active site involves Glu-141. His-144 serves as a coordination point for Zn(2+). Helical transmembrane passes span 155–175 and 193–213; these read LLQG…GGFI and GIVL…TMWF. Position 218 (Glu-218) interacts with Zn(2+).

It belongs to the peptidase M48B family. Requires Zn(2+) as cofactor.

It is found in the cell inner membrane. In Xylella fastidiosa (strain M12), this protein is Protease HtpX.